A 463-amino-acid polypeptide reads, in one-letter code: Glycine--tRNA ligase (463 aa).

2 residues coordinate substrate: Arg98 and Glu174. ATP contacts are provided by residues 206–208, 216–221, 290–291, and 334–337; these read RNE, FRTREF, EL, and GADR. 221-225 is a substrate binding site; that stretch reads FEQME. Substrate is bound at residue 330–334; it reads EPSLG.

The protein belongs to the class-II aminoacyl-tRNA synthetase family. As to quaternary structure, homodimer.

It localises to the cytoplasm. The enzyme catalyses tRNA(Gly) + glycine + ATP = glycyl-tRNA(Gly) + AMP + diphosphate. Functionally, catalyzes the attachment of glycine to tRNA(Gly). In Staphylococcus aureus (strain bovine RF122 / ET3-1), this protein is Glycine--tRNA ligase.